The chain runs to 545 residues: High-molecular-weight cytochrome c (545 aa).

The first 31 residues, 1–31, serve as a signal peptide directing secretion; the sequence is MRNGRTLLRWAGVLAATAIIGVGGFWSQGTT. The heme c site is built by His66, His69, Cys80, Cys83, His84, His111, Cys114, Cys117, His118, Cys135, Cys138, His139, His159, His162, Cys178, Cys181, His182, His183, Cys202, Cys205, His206, His222, Cys225, Cys228, His229, Cys244, Cys247, His248, His298, His301, Cys308, Cys311, His312, His313, Cys319, Cys322, His323, His341, Cys349, Cys352, His353, Cys362, Cys365, His366, Cys378, Cys381, His382, His449, His470, Cys477, Cys480, His481, His482, Cys493, Cys496, His497, His516, Cys519, Cys522, His523, Cys536, Cys539, and His540.

As to quaternary structure, monomer. In terms of processing, binds 16 heme c groups per subunit. High-spin heme 15 has single axial histidine ligand and the other hemes are low-spin bis-histidinyl coordinated.

It is found in the periplasm. HMWC (high-molecular-weight cytochrome c), ORF2, ORF3, ORF4, ORF5 and ORF6 in the HMC operon form a transmembrane protein complex that allows electron flow from the periplasmic hydrogenase to the cytoplasmic enzymes that catalyze reduction of sulfates. This chain is High-molecular-weight cytochrome c (hmcA), found in Nitratidesulfovibrio vulgaris (strain ATCC 29579 / DSM 644 / CCUG 34227 / NCIMB 8303 / VKM B-1760 / Hildenborough) (Desulfovibrio vulgaris).